A 277-amino-acid chain; its full sequence is Sulfur carrier protein FdhD (277 aa).

Residue C121 is the Cysteine persulfide intermediate of the active site. A Mo-bis(molybdopterin guanine dinucleotide)-binding site is contributed by 260–265 (FCKPGR).

The protein belongs to the FdhD family.

Its subcellular location is the cytoplasm. Required for formate dehydrogenase (FDH) activity. Acts as a sulfur carrier protein that transfers sulfur from IscS to the molybdenum cofactor prior to its insertion into FDH. This is Sulfur carrier protein FdhD from Shigella dysenteriae serotype 1 (strain Sd197).